Consider the following 707-residue polypeptide: MKDTPLQVHVLLGLAITTLVQAIDKKVDCPQLCTCEIRPWFTPRSIYMEASTVDCNDLGLLNFPARLPADTQILLLQTNNIARIEHSTDFPVNLTGLDLSQNNLSSVTNINVQKMSQLLSVYLEENKLTELPEKCLYGLSNLQELYVNHNLLSTISPGAFIGLHNLLRLHLNSNRLQMINSQWFDALPNLEILMLGDNPIIRIKDMNFQPLVKLRSLVIAGINLTEIPDDALAGLENLESISFYDNRLSKVPQVALQKAVNLKFLDLNKNPINRIRRGDFSNMLHLKELGINNMPELVSIDSLAVDNLPDLRKIEATNNPRLSYIHPNAFFRLPKLESLMLNTNALSALYHGTIESLPNLKEISIHSNPIRCDCVIRWINMNKTNIRFMEPDSLFCVDPPEFQGQNVRQVHFRDMMEICLPLIAPESFPSDLDVEADSYVSLHCRATAEPQPEIYWITPSGKKLLPNTMREKFYVHSEGTLEIRGITPKEGGLYTCIATNLVGADLKSIMIKVGGSVPQDNNGSLNIKIRDIRANSVLVSWKASSKILKSSVKWTAFVKTEDSHAAQSARIPFDVKVYNLTHLKPSTEYKICIDIPTVYQKSRKQCVNVTTKSLEHDGKEYGKNHTVFVACVGGLLGIIGVMCLFSCVSQEGSSEGEHSYAVNHCHKPALAFSELYPPLINLWESSKEKRATLEVKATAIGVPTNMS.

The signal sequence occupies residues Met1–Ala22. Positions Ile23–Ala69 constitute an LRRNT domain. At Ile23–Thr626 the chain is on the extracellular side. LRR repeat units lie at residues Asp70–Pro91, Asn93–Lys114, Gln117–Gly138, Asn141–Gly162, Asn165–Ala186, Asn189–Pro210, Lys213–Gly234, Asn237–Lys258, Asn261–Asn282, His285–Ala304, Asp310–Arg332, and Lys335–Pro358. N-linked (GlcNAc...) asparagine glycosylation is found at Asn93 and Asn103. The N-linked (GlcNAc...) asparagine glycan is linked to Asn223. The region spanning Asn368–Pro421 is the LRRCT domain. A glycan (N-linked (GlcNAc...) asparagine) is linked at Asn382. The 94-residue stretch at Pro421 to Gly514 folds into the Ig-like C2-type domain. An intrachain disulfide couples Cys444 to Cys496. Asn522, Asn579, Asn608, and Asn624 each carry an N-linked (GlcNAc...) asparagine glycan. The region spanning Gly523–Leu614 is the Fibronectin type-III domain. Residues Val627–Cys647 traverse the membrane as a helical segment. Topologically, residues Val648 to Ser707 are cytoplasmic.

As to expression, expressed in the brain, in Stronger expression in the ventricular zone and anlage of thalamus, spinal cord, and dorsal root ganglion in 11-17 dpc cerebellum and cerebral cortex in adults.

The protein resides in the membrane. The chain is Leucine-rich repeat neuronal protein 3 (Lrrn3) from Mus musculus (Mouse).